Reading from the N-terminus, the 150-residue chain is FAD synthase (150 aa).

Residues 20–21, 25–28, and Asp-103 contribute to the ATP site; these read TF and HPGH.

Belongs to the archaeal FAD synthase family. As to quaternary structure, homodimer. It depends on a divalent metal cation as a cofactor.

The enzyme catalyses FMN + ATP + H(+) = FAD + diphosphate. Its pathway is cofactor biosynthesis; FAD biosynthesis; FAD from FMN: step 1/1. In terms of biological role, catalyzes the transfer of the AMP portion of ATP to flavin mononucleotide (FMN) to produce flavin adenine dinucleotide (FAD) coenzyme. This is FAD synthase from Methanohalobium evestigatum (strain ATCC BAA-1072 / DSM 3721 / NBRC 107634 / OCM 161 / Z-7303).